A 459-amino-acid polypeptide reads, in one-letter code: GTPase Der (459 aa).

EngA-type G domains lie at 3–167 (FTLA…PEPV) and 188–363 (IRVA…AVWN). Residues 9 to 16 (GRPNVGKS), 56 to 60 (DTAGL), 119 to 122 (NKSE), 194 to 201 (GRPNAGKS), 241 to 245 (DTAGL), and 306 to 309 (NKWD) each bind GTP. A KH-like domain is found at 364–448 (RRVPTAALNR…PVRITLREKA (85 aa)).

This sequence belongs to the TRAFAC class TrmE-Era-EngA-EngB-Septin-like GTPase superfamily. EngA (Der) GTPase family. In terms of assembly, associates with the 50S ribosomal subunit.

Its function is as follows. GTPase that plays an essential role in the late steps of ribosome biogenesis. The sequence is that of GTPase Der from Rhodopseudomonas palustris (strain TIE-1).